The following is a 294-amino-acid chain: Acetylglutamate kinase (294 aa).

Residues 69–70 (GG), Arg-91, and Asn-190 contribute to the substrate site.

Belongs to the acetylglutamate kinase family. ArgB subfamily.

Its subcellular location is the cytoplasm. The enzyme catalyses N-acetyl-L-glutamate + ATP = N-acetyl-L-glutamyl 5-phosphate + ADP. The protein operates within amino-acid biosynthesis; L-arginine biosynthesis; N(2)-acetyl-L-ornithine from L-glutamate: step 2/4. Catalyzes the ATP-dependent phosphorylation of N-acetyl-L-glutamate. The protein is Acetylglutamate kinase of Mycobacterium bovis (strain ATCC BAA-935 / AF2122/97).